Consider the following 435-residue polypeptide: Elongation factor 1-alpha (435 aa).

Residues 4-229 (KPHLNLIVIG…DQLEIPPKPV (226 aa)) form the tr-type G domain. Residues 13–20 (GHVDHGKS) form a G1 region. 13 to 20 (GHVDHGKS) is a GTP binding site. Residue Ser20 participates in Mg(2+) binding. Positions 69-73 (GVTIN) are G2. The segment at 90–93 (DAPG) is G3. Residues 90–94 (DAPGH) and 152–155 (NKMD) each bind GTP. The interval 152 to 155 (NKMD) is G4. A G5 region spans residues 193–195 (VAP).

Belongs to the TRAFAC class translation factor GTPase superfamily. Classic translation factor GTPase family. EF-Tu/EF-1A subfamily.

The protein localises to the cytoplasm. The enzyme catalyses GTP + H2O = GDP + phosphate + H(+). Functionally, GTP hydrolase that promotes the GTP-dependent binding of aminoacyl-tRNA to the A-site of ribosomes during protein biosynthesis. In Sulfolobus acidocaldarius (strain ATCC 33909 / DSM 639 / JCM 8929 / NBRC 15157 / NCIMB 11770), this protein is Elongation factor 1-alpha.